The primary structure comprises 132 residues: Protein LEKR1 (132 aa).

Residues 37–116 are a coiled coil; the sequence is FKAMEEKVKA…KKQLSHLQDE (80 aa).

The sequence is that of Protein LEKR1 (LEKR1) from Homo sapiens (Human).